Reading from the N-terminus, the 1265-residue chain is Protein FAM193A (1265 aa).

Residues 107–142 (SEDTYSTLLQRYQRSEEELRRVAEEWLECQKRIDAY) are a coiled coil. Positions 247–272 (APDYLAERSPPSVSSASSGSGSSSPI) are disordered. A compositionally biased stretch (low complexity) spans 255–271 (SPPSVSSASSGSGSSSP). Position 293 is a phosphoserine (Ser293). 7 disordered regions span residues 331–407 (NGGG…EQAP), 553–586 (GSEILGPTLSETRPEALPPPSSNETPAVSDSKEK), 626–674 (VQSS…APLP), 750–785 (ENGVYDPQQDDGDESADEDSCSEHSSSTSTSTNQKE), 822–841 (LTKRKEEQPKKMDQISERES), 859–881 (ETKPVSSTRAAKRARHKQRKLEE), and 893–1163 (EHLH…DRVN). Positions 355–365 (EADDEEADGES) are enriched in acidic residues. Position 383 is a phosphoserine (Ser383). Ser642 bears the Phosphoserine mark. Acidic residues predominate over residues 757–769 (QQDDGDESADEDS). Residues 772–781 (EHSSSTSTST) show a composition bias toward low complexity. Basic residues predominate over residues 868-877 (AAKRARHKQR). Residues 873–932 (RHKQRKLEEKARLEAEARAREHLHLQEEQRRREEEEDEEEEEDRFKEEFQRLQELQKLRA) adopt a coiled-coil conformation. Basic and acidic residues-rich tracts occupy residues 893-905 (EHLHLQEEQRRRE) and 915-929 (DRFKEEFQRLQELQK). Over residues 931 to 940 (RAVKKKKKER) the composition is skewed to basic residues. Positions 953–973 (RNFQAATESVPNSGNIHNGSL) are enriched in polar residues. Positions 1093-1118 (TEQKREERKVNSNNNNKKQLNHIKDE) form a coiled coil. Ser1129 and Ser1144 each carry phosphoserine. The span at 1149–1159 (GKNKKNKKKKG) shows a compositional bias: basic residues.

This sequence belongs to the FAM193 family.

The polypeptide is Protein FAM193A (FAM193A) (Homo sapiens (Human)).